The chain runs to 159 residues: MMTTHKQVNIYTDGSCLGNPGPGGYGIVMQYKQHSKEIADGFALTTNNRMELLAPIIALEALMEPCIVTLTSDSQYMRQGITQWIHGWKKKGWMTSNKQAVKNVDLWKRLDSVSQRHNIDWRWVKGHTGHKQNERCDKLARDAAEAKPKQIDTGYQESL.

In terms of domain architecture, RNase H type-1 spans 4–145 (THKQVNIYTD…CDKLARDAAE (142 aa)). The Mg(2+) site is built by Asp13, Glu51, Asp73, and Asp137.

It belongs to the RNase H family. As to quaternary structure, monomer. Mg(2+) is required as a cofactor.

It localises to the cytoplasm. The catalysed reaction is Endonucleolytic cleavage to 5'-phosphomonoester.. Its function is as follows. Endonuclease that specifically degrades the RNA of RNA-DNA hybrids. The protein is Ribonuclease H of Shewanella denitrificans (strain OS217 / ATCC BAA-1090 / DSM 15013).